The primary structure comprises 153 residues: Xanthine-guanine phosphoribosyltransferase (153 aa).

Residues 37-38 (RG), Arg-69, and 88-96 (DDLVDTGGT) contribute to the 5-phospho-alpha-D-ribose 1-diphosphate site. Arg-69 contributes to the GMP binding site. Residue Asp-89 coordinates Mg(2+). Positions 92 and 135 each coordinate guanine. Xanthine contacts are provided by Asp-92 and Ile-135. Residues 92–96 (DTGGT) and 134–135 (WI) contribute to the GMP site.

This sequence belongs to the purine/pyrimidine phosphoribosyltransferase family. XGPT subfamily. In terms of assembly, homotetramer. It depends on Mg(2+) as a cofactor.

The protein localises to the cell inner membrane. It carries out the reaction GMP + diphosphate = guanine + 5-phospho-alpha-D-ribose 1-diphosphate. The catalysed reaction is XMP + diphosphate = xanthine + 5-phospho-alpha-D-ribose 1-diphosphate. It catalyses the reaction IMP + diphosphate = hypoxanthine + 5-phospho-alpha-D-ribose 1-diphosphate. It participates in purine metabolism; GMP biosynthesis via salvage pathway; GMP from guanine: step 1/1. Its pathway is purine metabolism; XMP biosynthesis via salvage pathway; XMP from xanthine: step 1/1. Its function is as follows. Purine salvage pathway enzyme that catalyzes the transfer of the ribosyl-5-phosphate group from 5-phospho-alpha-D-ribose 1-diphosphate (PRPP) to the N9 position of the 6-oxopurines guanine and xanthine to form the corresponding ribonucleotides GMP (guanosine 5'-monophosphate) and XMP (xanthosine 5'-monophosphate), with the release of PPi. To a lesser extent, also acts on hypoxanthine. This chain is Xanthine-guanine phosphoribosyltransferase, found in Photorhabdus laumondii subsp. laumondii (strain DSM 15139 / CIP 105565 / TT01) (Photorhabdus luminescens subsp. laumondii).